The primary structure comprises 252 residues: Phosphate import ATP-binding protein PstB (252 aa).

Positions 6–247 constitute an ABC transporter domain; that stretch reads IDTRDVNFWY…PEKEATQNYI (242 aa). Position 38–45 (38–45) interacts with ATP; that stretch reads GPSGCGKS.

It belongs to the ABC transporter superfamily. Phosphate importer (TC 3.A.1.7) family. In terms of assembly, the complex is composed of two ATP-binding proteins (PstB), two transmembrane proteins (PstC and PstA) and a solute-binding protein (PstS).

Its subcellular location is the cell inner membrane. It catalyses the reaction phosphate(out) + ATP + H2O = ADP + 2 phosphate(in) + H(+). In terms of biological role, part of the ABC transporter complex PstSACB involved in phosphate import. Responsible for energy coupling to the transport system. This Bacteroides thetaiotaomicron (strain ATCC 29148 / DSM 2079 / JCM 5827 / CCUG 10774 / NCTC 10582 / VPI-5482 / E50) protein is Phosphate import ATP-binding protein PstB.